The sequence spans 144 residues: Large ribosomal subunit protein uL15 (144 aa).

A disordered region spans residues 1-54; sequence MRLNTLSPAEGSKKAGKRLGRGIGSGLGKTGGRGHKGQKSRSGGGVRRGFEGGQ. Residues 21 to 31 are compositionally biased toward gly residues; the sequence is RGIGSGLGKTG.

This sequence belongs to the universal ribosomal protein uL15 family. Part of the 50S ribosomal subunit.

Binds to the 23S rRNA. In Salmonella arizonae (strain ATCC BAA-731 / CDC346-86 / RSK2980), this protein is Large ribosomal subunit protein uL15.